The following is a 428-amino-acid chain: Dihydroorotase (428 aa).

Positions 61 and 63 each coordinate Zn(2+). Substrate contacts are provided by residues 63 to 65 (HLR) and Asn-95. Residues Asp-153, His-180, and His-233 each coordinate Zn(2+). Asn-279 lines the substrate pocket. Zn(2+) is bound at residue Asp-306. Asp-306 is an active-site residue. Substrate contacts are provided by residues His-310 and 324–325 (FG).

This sequence belongs to the metallo-dependent hydrolases superfamily. DHOase family. Class I DHOase subfamily. Zn(2+) serves as cofactor.

The enzyme catalyses (S)-dihydroorotate + H2O = N-carbamoyl-L-aspartate + H(+). Its pathway is pyrimidine metabolism; UMP biosynthesis via de novo pathway; (S)-dihydroorotate from bicarbonate: step 3/3. Its function is as follows. Catalyzes the reversible cyclization of carbamoyl aspartate to dihydroorotate. The polypeptide is Dihydroorotase (Geobacillus kaustophilus (strain HTA426)).